The sequence spans 207 residues: MSARGNLFIVSAPSGAGKSSLITALLKDKPQDMQVSVSHTTRAPRPGEVDGQHYHFVSVEQFKALIAENAFFESAEVFGNFYGTSRQVIENTLSLGIDVFLDIDWQGAQQVKKIMPEAIGVFILPPSKAELERRLTGRGQDSSDVIAARMAQAVSEMSHYNEYDFVIINDDFEQALADLKSIIFSQRLTCASQFHTHNDMLVDLLAD.

The Guanylate kinase-like domain maps to 5–184 (GNLFIVSAPS…ALADLKSIIF (180 aa)). 12 to 19 (APSGAGKS) is an ATP binding site.

Belongs to the guanylate kinase family.

It localises to the cytoplasm. It carries out the reaction GMP + ATP = GDP + ADP. Its function is as follows. Essential for recycling GMP and indirectly, cGMP. The sequence is that of Guanylate kinase from Shewanella denitrificans (strain OS217 / ATCC BAA-1090 / DSM 15013).